Reading from the N-terminus, the 447-residue chain is UDP-N-acetylmuramoyl-L-alanyl-D-glutamate--2,6-diaminopimelate ligase (447 aa).

Residue Thr21 participates in UDP-N-acetyl-alpha-D-muramoyl-L-alanyl-D-glutamate binding. Position 74–80 (74–80 (GTNGKTT)) interacts with ATP. Residues 117–118 (TT), Ser144, Gln150, and Arg152 each bind UDP-N-acetyl-alpha-D-muramoyl-L-alanyl-D-glutamate. Position 184 is an N6-carboxylysine (Lys184). Meso-2,6-diaminopimelate contacts are provided by residues Arg340, 364 to 367 (DNPR), Gly415, and Glu419. The short motif at 364 to 367 (DNPR) is the Meso-diaminopimelate recognition motif element.

Belongs to the MurCDEF family. MurE subfamily. It depends on Mg(2+) as a cofactor. Post-translationally, carboxylation is probably crucial for Mg(2+) binding and, consequently, for the gamma-phosphate positioning of ATP.

It is found in the cytoplasm. The catalysed reaction is UDP-N-acetyl-alpha-D-muramoyl-L-alanyl-D-glutamate + meso-2,6-diaminopimelate + ATP = UDP-N-acetyl-alpha-D-muramoyl-L-alanyl-gamma-D-glutamyl-meso-2,6-diaminopimelate + ADP + phosphate + H(+). It participates in cell wall biogenesis; peptidoglycan biosynthesis. Functionally, catalyzes the addition of meso-diaminopimelic acid to the nucleotide precursor UDP-N-acetylmuramoyl-L-alanyl-D-glutamate (UMAG) in the biosynthesis of bacterial cell-wall peptidoglycan. The protein is UDP-N-acetylmuramoyl-L-alanyl-D-glutamate--2,6-diaminopimelate ligase of Helicobacter pylori (strain J99 / ATCC 700824) (Campylobacter pylori J99).